The following is a 467-amino-acid chain: Putative laccase-16 (467 aa).

3 consecutive Plastocyanin-like domains span residues 7 to 88, 98 to 225, and 318 to 451; these read VLGS…PKHG, KEIP…YTDS, and DFPN…KDGK. Cu cation is bound by residues His22, His24, His67, and His69. Residues His368, His371, His373, His430, Cys431, His432, His436, and Met441 each contribute to the Cu cation site.

Belongs to the multicopper oxidase family. It depends on Cu cation as a cofactor.

The protein resides in the secreted. It is found in the extracellular space. The protein localises to the apoplast. The enzyme catalyses 4 hydroquinone + O2 = 4 benzosemiquinone + 2 H2O. Its function is as follows. Lignin degradation and detoxification of lignin-derived products. This is Putative laccase-16 (LAC16) from Oryza sativa subsp. japonica (Rice).